We begin with the raw amino-acid sequence, 218 residues long: Large ribosomal subunit protein uL3 (218 aa).

N5-methylglutamine is present on Gln-154.

The protein belongs to the universal ribosomal protein uL3 family. In terms of assembly, part of the 50S ribosomal subunit. Forms a cluster with proteins L14 and L19. Post-translationally, methylated by PrmB.

Functionally, one of the primary rRNA binding proteins, it binds directly near the 3'-end of the 23S rRNA, where it nucleates assembly of the 50S subunit. This chain is Large ribosomal subunit protein uL3, found in Polynucleobacter asymbioticus (strain DSM 18221 / CIP 109841 / QLW-P1DMWA-1) (Polynucleobacter necessarius subsp. asymbioticus).